Reading from the N-terminus, the 221-residue chain is Leucine rich adaptor protein 1-like (221 aa).

Residue Met1 is modified to N-acetylmethionine. The tract at residues 1 to 81 (MEDGPLPDLR…SGSPRRSHPS (81 aa)) is disordered. Basic and acidic residues-rich tracts occupy residues 8-21 (DLRD…RKVP) and 28-39 (LRGEEPAPREGA). Positions 48-75 (SCSSSSSCSSFAPSVSSSSSSSPASGSP) are enriched in low complexity.

This is Leucine rich adaptor protein 1-like (Lurap1l) from Rattus norvegicus (Rat).